The sequence spans 367 residues: Peptide chain release factor 2 (367 aa).

Gln254 is modified (N5-methylglutamine).

It belongs to the prokaryotic/mitochondrial release factor family. Post-translationally, methylated by PrmC. Methylation increases the termination efficiency of RF2.

Its subcellular location is the cytoplasm. In terms of biological role, peptide chain release factor 2 directs the termination of translation in response to the peptide chain termination codons UGA and UAA. In Aromatoleum aromaticum (strain DSM 19018 / LMG 30748 / EbN1) (Azoarcus sp. (strain EbN1)), this protein is Peptide chain release factor 2.